Consider the following 290-residue polypeptide: UPF0507 protein YML003W (290 aa).

This sequence belongs to the UPF0507 family.

The sequence is that of UPF0507 protein YML003W from Saccharomyces cerevisiae (strain ATCC 204508 / S288c) (Baker's yeast).